The primary structure comprises 281 residues: CLA biosynthesis isomerase (281 aa).

This sequence belongs to the ADC family.

It is found in the cytoplasm. It catalyses the reaction 10-oxo-(12Z)-octadecenoate = 10-oxo-(11E)-octadecenoate. It functions in the pathway lipid metabolism; fatty acid metabolism. Is involved in a saturation metabolic pathway of polyunsaturated fatty acids, that detoxifies unsaturated fatty acids and generates hydroxy fatty acids, oxo fatty acids, conjugated fatty acids such as conjugated linoleic acids (CLAs), and partially saturated trans-fatty acids as intermediates. CLA-DC catalyzes the migration of the carbon-carbon double bond in 10-oxo-(12Z)-octadecenoate to produce 10-oxo-(11E)-octadecenoate, during linoleate metabolism. As part of the gut microbiome, this enzyme modifies host fatty acid composition and is expected to improve human health by altering lipid metabolism related to the onset of metabolic syndrome. In Lactiplantibacillus plantarum (Lactobacillus plantarum), this protein is CLA biosynthesis isomerase.